We begin with the raw amino-acid sequence, 324 residues long: Adenosine kinase (324 aa).

Substrate-binding positions include serine 8, aspartate 12, serine 36, glycine 48, asparagine 52, phenylalanine 102, phenylalanine 116, and 172–173; that span reads QQ. Residues asparagine 195, 223–228, and glycine 256 each bind ATP; that span reads TLGPKG. Residue aspartate 257 coordinates substrate. Aspartate 257 (proton acceptor) is an active-site residue.

This sequence belongs to the carbohydrate kinase PfkB family. As to quaternary structure, homodimer. Mg(2+) serves as cofactor.

The catalysed reaction is adenosine + ATP = AMP + ADP + H(+). It catalyses the reaction adenosine + GTP = GDP + AMP + H(+). It carries out the reaction dGTP + adenosine = dGDP + AMP + H(+). Its pathway is purine metabolism; AMP biosynthesis via salvage pathway; AMP from adenosine: step 1/1. Functionally, catalyzes the phosphorylation of adenosine to adenosine monophosphate (AMP). Prefers dGTP and GTP to ATP as phosphate donors in vitro. This Mycobacterium bovis (strain ATCC BAA-935 / AF2122/97) protein is Adenosine kinase (adoK).